We begin with the raw amino-acid sequence, 417 residues long: Serine hydroxymethyltransferase (417 aa).

(6S)-5,6,7,8-tetrahydrofolate-binding positions include leucine 121 and 125–127 (GHL). Lysine 229 is modified (N6-(pyridoxal phosphate)lysine). 355–357 (SPF) contacts (6S)-5,6,7,8-tetrahydrofolate.

The protein belongs to the SHMT family. As to quaternary structure, homodimer. It depends on pyridoxal 5'-phosphate as a cofactor.

It is found in the cytoplasm. The catalysed reaction is (6R)-5,10-methylene-5,6,7,8-tetrahydrofolate + glycine + H2O = (6S)-5,6,7,8-tetrahydrofolate + L-serine. It participates in one-carbon metabolism; tetrahydrofolate interconversion. The protein operates within amino-acid biosynthesis; glycine biosynthesis; glycine from L-serine: step 1/1. Functionally, catalyzes the reversible interconversion of serine and glycine with tetrahydrofolate (THF) serving as the one-carbon carrier. This reaction serves as the major source of one-carbon groups required for the biosynthesis of purines, thymidylate, methionine, and other important biomolecules. Also exhibits THF-independent aldolase activity toward beta-hydroxyamino acids, producing glycine and aldehydes, via a retro-aldol mechanism. The polypeptide is Serine hydroxymethyltransferase (Shewanella baltica (strain OS185)).